Here is a 171-residue protein sequence, read N- to C-terminus: S-ribosylhomocysteine lyase (171 aa).

Residues H54, H58, and C128 each contribute to the Fe cation site.

It belongs to the LuxS family. In terms of assembly, homodimer. It depends on Fe cation as a cofactor.

It carries out the reaction S-(5-deoxy-D-ribos-5-yl)-L-homocysteine = (S)-4,5-dihydroxypentane-2,3-dione + L-homocysteine. In terms of biological role, involved in the synthesis of autoinducer 2 (AI-2) which is secreted by bacteria and is used to communicate both the cell density and the metabolic potential of the environment. The regulation of gene expression in response to changes in cell density is called quorum sensing. Catalyzes the transformation of S-ribosylhomocysteine (RHC) to homocysteine (HC) and 4,5-dihydroxy-2,3-pentadione (DPD). The protein is S-ribosylhomocysteine lyase of Enterobacter sp. (strain 638).